A 472-amino-acid polypeptide reads, in one-letter code: Glutamate--tRNA ligase 1 (472 aa).

The 'HIGH' region signature appears at 13–23 (PSPTGYLHIGG). Cys-102, Cys-104, Cys-129, and Glu-131 together coordinate Zn(2+). The 'KMSKS' region motif lies at 239 to 243 (RLSKR). Residue Lys-242 participates in ATP binding.

The protein belongs to the class-I aminoacyl-tRNA synthetase family. Glutamate--tRNA ligase type 1 subfamily. Monomer. Zn(2+) is required as a cofactor.

It is found in the cytoplasm. It carries out the reaction tRNA(Glu) + L-glutamate + ATP = L-glutamyl-tRNA(Glu) + AMP + diphosphate. Functionally, catalyzes the attachment of glutamate to tRNA(Glu) in a two-step reaction: glutamate is first activated by ATP to form Glu-AMP and then transferred to the acceptor end of tRNA(Glu). This chain is Glutamate--tRNA ligase 1, found in Syntrophus aciditrophicus (strain SB).